A 270-amino-acid polypeptide reads, in one-letter code: Homeobox protein pal-1 (270 aa).

Disordered regions lie at residues 1 to 24 (MSVD…TTVP), 96 to 130 (VKPP…SGAA), and 175 to 201 (LGNN…TNNV). Composition is skewed to low complexity over residues 14–24 (SSSTPSPTTVP) and 101–130 (SNGS…SGAA). A DNA-binding region (homeobox) is located at residues 206 to 265 (ADKYRMVYSDYQRLELEKEFHTSPFITSDRKSQLSTMLSLTERQIKIWFQNRRAKDRRDK).

The protein belongs to the Caudal homeobox family. As to quaternary structure, interacts with tir-1 and let-756. Blastomeres. Embryo. Oocytes.

It is found in the nucleus. The protein resides in the chromosome. Its subcellular location is the centromere. It localises to the kinetochore. Transcriptional activator. Interacts with promoter regions for tbx-8.9, tbx-9, elt-1, hnd-1, scrt-1, and vab-7 genes. Binds the sequence ATTTATGAC. Binds to the enhancer region of the hlh-1 gene promoter during embryonic body wall muscle development. Activates the gene for mab-5 in embryo development. Necessary for vab-7 expression in C blastomeres in the posterior of embryos. Required for posterior V6 neuroectoblast cell fate specification during postembryonic neurogenesis (patterning) which generates the characteristic ray lineage during male tail development. Binds to ced-3 promoter and activated expression which is crucial for tail-spike cell death. Has a role in E cell specification in endoderm development and body wall muscle development. This is Homeobox protein pal-1 (pal-1) from Caenorhabditis elegans.